The sequence spans 692 residues: Elongation factor G (692 aa).

One can recognise a tr-type G domain in the interval 8-282 (ENTRNIGIMA…AVIDYLPSPL (275 aa)). GTP is bound by residues 17 to 24 (AHIDAGKT), 81 to 85 (DTPGH), and 135 to 138 (NKMD).

This sequence belongs to the TRAFAC class translation factor GTPase superfamily. Classic translation factor GTPase family. EF-G/EF-2 subfamily.

The protein localises to the cytoplasm. Catalyzes the GTP-dependent ribosomal translocation step during translation elongation. During this step, the ribosome changes from the pre-translocational (PRE) to the post-translocational (POST) state as the newly formed A-site-bound peptidyl-tRNA and P-site-bound deacylated tRNA move to the P and E sites, respectively. Catalyzes the coordinated movement of the two tRNA molecules, the mRNA and conformational changes in the ribosome. The chain is Elongation factor G from Bacillus cereus (strain ATCC 10987 / NRS 248).